Reading from the N-terminus, the 310-residue chain is Probable cobalamin biosynthesis protein CobD (310 aa).

5 helical membrane-spanning segments follow: residues 53-73 (LVFG…IFFT), 80-100 (LISN…FSIG), 157-177 (DSII…AFIY), 215-235 (IAGI…VPAI), and 289-309 (AVDY…FNLI).

It belongs to the CobD/CbiB family.

It is found in the cell membrane. The protein operates within cofactor biosynthesis; adenosylcobalamin biosynthesis. Converts cobyric acid to cobinamide by the addition of aminopropanol on the F carboxylic group. This is Probable cobalamin biosynthesis protein CobD from Methanococcus vannielii (strain ATCC 35089 / DSM 1224 / JCM 13029 / OCM 148 / SB).